A 147-amino-acid chain; its full sequence is Protein phosphatase 1 regulatory subunit 14A (147 aa).

The segment covering 1–11 (MAAQRLGKRVL) has biased composition (basic residues). The tract at residues 1–36 (MAAQRLGKRVLSKLQSPSRARGPGGSPSGLQKRHAR) is disordered. A Phosphoserine modification is found at Ser-26. An inhibitory region spans residues 35 to 120 (ARVTVKYDRR…LLAKLRGLHK (86 aa)). Residue Thr-38 is modified to Phosphothreonine; by PKC. The tract at residues 118–147 (LHKQPGFPQPSPSDDPSLSPRQDRAHTAPP) is disordered. Residues Ser-128, Ser-134, and Ser-136 each carry the phosphoserine modification. A compositionally biased stretch (basic and acidic residues) spans 138-147 (RQDRAHTAPP).

Belongs to the PP1 inhibitor family.

It localises to the cytoplasm. In terms of biological role, inhibitor of PPP1CA. Has over 1000-fold higher inhibitory activity when phosphorylated, creating a molecular switch for regulating the phosphorylation status of PPP1CA substrates and smooth muscle contraction. The chain is Protein phosphatase 1 regulatory subunit 14A (Ppp1r14a) from Mus musculus (Mouse).